Reading from the N-terminus, the 307-residue chain is GTPase Era (307 aa).

Residues Arg-13–Pro-180 form the Era-type G domain. The interval Gly-21–Ser-28 is G1. GTP is bound at residue Gly-21–Ser-28. The interval Gln-47–Ala-51 is G2. The G3 stretch occupies residues Asp-68–Gly-71. GTP-binding positions include Asp-68–Ile-72 and Asn-130–Asp-133. A G4 region spans residues Asn-130–Asp-133. The interval Ile-159–Ala-161 is G5. The KH type-2 domain occupies Leu-211–Glu-288.

It belongs to the TRAFAC class TrmE-Era-EngA-EngB-Septin-like GTPase superfamily. Era GTPase family. As to quaternary structure, monomer.

Its subcellular location is the cytoplasm. The protein resides in the cell inner membrane. Its function is as follows. An essential GTPase that binds both GDP and GTP, with rapid nucleotide exchange. Plays a role in 16S rRNA processing and 30S ribosomal subunit biogenesis and possibly also in cell cycle regulation and energy metabolism. This Bradyrhizobium sp. (strain ORS 278) protein is GTPase Era.